The sequence spans 375 residues: POU domain, class 3, transcription factor 1-A (375 aa).

Disordered stretches follow at residues 1 to 29, 67 to 138, and 151 to 200; these read MAATAQYLPRNNSLPSNPLMHPDSDRMHQ, PASD…HQPL, and MLGP…PSSD. 3 stretches are compositionally biased toward polar residues: residues 107-117, 129-138, and 151-160; these read VHQQSPSSHAW, SPSSNSHQPL, and MLGPQASSLH. Basic and acidic residues predominate over residues 162–177; that stretch reads SMRDPLHDDPGVHDTQ. The POU-specific domain maps to 194 to 268; it reads EDAPSSDDLE…LLNKWLEETD (75 aa). Positions 286 to 345 form a DNA-binding region, homeobox; the sequence is KRKKRTSIEVGVKGALENHFLKCPKPSAHEITSLADSLQLEKEVVRVWFCNRRQKEKRMT.

Belongs to the POU transcription factor family. Class-3 subfamily. In terms of tissue distribution, in embryos at the neural fold stage, localized primarily in the anterior neural plate, and localized mostly in the anterior region of the nerve cord of neurula stage embryos. In tailbud stages, expressed predominantly in the eye and brain, with weak expression along the length of the nerve cord. In adults, expressed in skin and brain.

Its subcellular location is the nucleus. In terms of biological role, acts as a transcription factor. May play a role in neuronal differentiation. The sequence is that of POU domain, class 3, transcription factor 1-A (pou3f1-a) from Xenopus laevis (African clawed frog).